We begin with the raw amino-acid sequence, 299 residues long: Oxygen-dependent coproporphyrinogen-III oxidase (299 aa).

Ser-92 is a binding site for substrate. His-96 and His-106 together coordinate Mn(2+). The active-site Proton donor is His-106. 108–110 (NVR) contacts substrate. Mn(2+) contacts are provided by His-145 and His-175. An important for dimerization region spans residues 240 to 275 (YVEFNLVWDRGTLFGLQTGGRTESILMSMPPLVRWE). 258–260 (GGR) provides a ligand contact to substrate.

Belongs to the aerobic coproporphyrinogen-III oxidase family. As to quaternary structure, homodimer. Requires Mn(2+) as cofactor.

The protein resides in the cytoplasm. The catalysed reaction is coproporphyrinogen III + O2 + 2 H(+) = protoporphyrinogen IX + 2 CO2 + 2 H2O. It functions in the pathway porphyrin-containing compound metabolism; protoporphyrin-IX biosynthesis; protoporphyrinogen-IX from coproporphyrinogen-III (O2 route): step 1/1. Involved in the heme biosynthesis. Catalyzes the aerobic oxidative decarboxylation of propionate groups of rings A and B of coproporphyrinogen-III to yield the vinyl groups in protoporphyrinogen-IX. In Escherichia coli (strain SE11), this protein is Oxygen-dependent coproporphyrinogen-III oxidase.